The chain runs to 405 residues: Putative colanic acid biosynthesis glycosyl transferase WcaC (405 aa).

It participates in slime biogenesis; slime polysaccharide biosynthesis. In Escherichia coli (strain K12), this protein is Putative colanic acid biosynthesis glycosyl transferase WcaC (wcaC).